The chain runs to 185 residues: Ribonuclease HII (185 aa).

The RNase H type-2 domain maps to 1–185 (MIILGIDEAG…KSYKPIQLLL (185 aa)). A divalent metal cation contacts are provided by D7, E8, and D99.

It belongs to the RNase HII family. Requires Mn(2+) as cofactor. Mg(2+) is required as a cofactor.

Its subcellular location is the cytoplasm. The catalysed reaction is Endonucleolytic cleavage to 5'-phosphomonoester.. In terms of biological role, endonuclease that specifically degrades the RNA of RNA-DNA hybrids. This is Ribonuclease HII from Francisella philomiragia subsp. philomiragia (strain ATCC 25017 / CCUG 19701 / FSC 153 / O#319-036).